A 3459-amino-acid polypeptide reads, in one-letter code: MVIDNEEKKKKWEYATDEYKTCSNNIDEDILKDDKDVSYFEKVKSSDNVLKYDECSPLKEKDTSYKGEHIKRGQFCKNKNNIYSDDDNNNIYNDDDNNNIYNDDDNNIYSCNNSYVSTHFGNTKRSDDMNNAENKKKKNEKDLFYDKVDEILNRQSDNDDDWIFNEDDEKKNKNNDGNDNRYDYNDLQNNNNNDNNKYDYNFYDDEKKNKNNDGDDNKYDYNHLQNNNNNKYDYNFDDDEKKKSHTPFDFYQEERQNKAYFLNIHTLNFEAHMLHALLKKNKYRLTKYNTNMNNMIYKYLYLYKKKKSLKYKHLKEQSYNNYTKHKTYNYHHTNEKEKKKNTHVDKQKIYVDDNKGNVSPEQVIHNKIENMEKDDKGKFNKTDQTNKLLNIDYYNKNNKYGYITPDNDDGDDYNDDNDNDDNYNDDNYNDDNYNDDNYNDDNYNDEKKKKKNNLMDVHFLYMEYFIRKKKLTELTNIYNKYIYNKDNLLYLKKWYLKNVYILNSKGYDESNIRISDPKKIYEYNNINNNCSDIPGGENSDTSYYFSPPSIKTYCLNNYFICLLSKNNEIIVIGYKFINIHNLIFFKENNNIDDFFFKTEGPININFNYYKYPHYAVIKNDLWKNIKNIKNIHINDKNKLCVNTSNCVYVFEIFLSNSKVKYKYLYNYIEKGTFLNKENNISSSLHIKEKKLLYFTPYNIIYLNNNKNIFNSSITITKDIKFKYKILNTSFYKNNIYMVISYFNKITVFKNEAIYFVLQYDRNGDVVSEQEVNEKKKGENEMNKEVNKMNEEVNKMNEEVNKMNEEVNKMNKEVNKMDEEVNKMNKEVNKMNKESNEMNKEANEMNKDEENEKYENHNYNYENNICINTNGYDKKGEDEEKYNLKDDYISYIPFLGILENNHFCAAYGKTLTVFEYVSKVVIKYKYILNHSIYFFKSCDNNIIIIYDKYKLYVYQIMLKGDSNFCILLLYEKKMNNVTSRVISEGYNIYESYDGFIQVNKKNVKVNKNDKIANFMFSLFNQDIVLNEQNSKKDVSFFYINLIYIYVLNNDKVDIIVINSLIYMIYLFFTYKKYDLLLMFILHLYNGDVCVLSDFSLKEEEKKIQIQKLLFFFFETQMRDIIQNYKDYKEKQIHNNDYFIKYRGDQNEGRRQEKVLNNKDNNDKNDKNDKNDKNDKNDKNEKNEKNDYDKRSEYISYEYTPLRDITYTVSSLSSTLSCSLSGDEKKEEDSIMSLSKEDDRYHKYIIDDQDSYNLYRHYNNTNHYEYIKNKKEVILKDEEEDIYINNKIINKECIEELIHLCYLSIELSIKFNINLYEYTFHLFKIYNIENVYFYICEPYIINKKICLTHHSLIYNLVQYFKRFYSIFCLYDDTYYDLFLFFCTLLTSKGGDEIIKGHKGIIPTQGDKNETDEGNKNETDEGDKNETDEGDKNETDEGNKNETEEIYKNETDEGNKNETEEIYKNDNDDDNYDDDYYHHYGEHHHYDSIMNNGYLTKFIFLLKIQNKREHYELNYPHNHNTVPYKKKEKMDNMYHSNLMICEDKSKEYINEELITFDYYFINKYLNIKKNFKQIKKIYCFICIINKFCKFFENINLEKNLENIISLLPLHISSYLYNKHNEDKTTICEFFISYMIRKKNIFFFQFCIDNNIKNEMFPIYIPMYIFNNFYQTHFFLYYLYCVIFKKQFSIHMDTYVNEKRHMVYIKDMYVLKKKQKKKGNNQKQNHNYNDDINNKENNNNNNVPLHRICIDDSSYYDKVFFVYSPLLYEKEQNYGINKNIVTLIEYMCKRYDKKCLHIKEEKDILSGLFFKELNVIEGNYMPRFEENKNKNDKIKDDNYGNNDKRCGKKCVKKCEKKCEKKCEKKCEKKCEKKCEKKCEKKCEKKCEKKCEKKCEKKCEKKCEKKCEKKCNHYDLDEKKYDQHDLCDQKYDQHDLCDQKYDQHDLCDQKYDQTCNILNNNIYYKDETNLTMRFPLKVEKEHNNVPNMNNGSNIYKNVNTYNNFDNIKKIENITYEGANKLDMLKKGENINLFINKINCKSKMENILKEFNINDFFNLDKNGMFLLFQMSLSNCFYIMNNIFFFYHHNNNNMDRSSNYLINIFIENILEFYIHLNVTYVHYKNKLYFILQENVENLKDIYKHIIYKINTCVHYDEIRNFALKMKNFIIISSDIRSVQNNKMLTLIPWIIFQLFFIKNHMKKIIQCTTYMFLLFFIFSTDFLFDECINIYFIHLLMQFENKKYKKFNLAHRNNNNDNDNNDHTDRMRMRYYDDNNNNNDHTDRMRMRYYDDNNNNDHTDRMRMRYYDDNNNNDHTDRMRMRYYDHRHNNINISIFNYQLYKKQKEKFHKFLSTFNYQKDIYDNNFIKIFHLKKKNIFLKKKTILYNLEMFRNELDFNIITYIMKRLYSFDLSYLLNLFSTDSTYNHMESHNPETYVRSTNTKEDIQKNLYIPDKTNYSFKNICNVNYNNNNNNNNNNNNNEHAKNGSPNKDVYCNITNKINLLNKKKETKISIFKGGHKHVVNKKKKKKDIPLSNKRMEKKKNKINNICSINFCRNQLRYILLLYVKRLIMVLEGLKKNEHEKNDGRIYKDNINNADDNNDDDNINDDDNINDDDNINDDDNNNDDDNNNDDNNDDNNINNDNNDDDNNNNNNIYNNYYHNKKELILNIMKYILFFSCTKKYTNVCLLLFDYFGYYNVVIQYYKKYKLNDLYEYIYFKIYSFYKETRLKKRIYGYLFYTTLLKNITSLNNLFVHYILNNYFFFHSKSMYMLKKRKKKKIQKGRIWKREENGEKKKNEKNESEKNERNEKNEKNEKHEKHEKHEKNEKNGSVNMIKCKDKGDKNDEHNIERFGKKQMKEFMVMSYPERTIQYKEENILSFKNDILYNKDVCNNINKYNNKKYCKNLSLYHVKNYFFHISLYFIKSLLCSRNNFNDLIKMRIYFLLLYKIKFVRKIKSYLFKKHFVKYIDLLCKYNKDKVYKCVKSINCETYISIYEKHHNINVILYIYEKQGKFFKVIQICLKEIKNNISKLYNILKKFFKNNNNNNKKKKNKKKNIYIKSFFFSTKVTYDDMFCINFDHHVDIYNFYKIPLKKKITKCLFCSCKEKTQQIVKDKNLFIQKMFGDLNYISKERSFFLECFVINKRRRGMATCVRSEDIPNVMDIKKGHDHMSINKSTNEYLNKRKNQENYHNLQNTYCNLHSCYEKGIHWSNRYGKYNNCENIKGHKKRLIKSRWLFIIKEYNNIFLYIYMLSFILKKNKITNNKINEYIISYILNQCINGYINIHEKVINSTLNKKKKKKKLLFFFNYIFEQIILFVININSYNHTQNVCQKILSQYKQKFDIKLIKMPIIQVLKNLCDTYMFFNDTNEIAQKNIKESMKYYSYQKKKGLIINFEQSNHKHKFNMNLDKKSYVLSLNKQNLNHTITKSYFSQPSNIIYIYKCDHSNHFACTNLCYVCDYESAQEI.

The segment covering 158–167 (NDDDWIFNED) has biased composition (acidic residues). Disordered regions lie at residues 158–230 (NDDD…NNNN) and 400–447 (YGYI…NDEK). Positions 168-184 (DEKKNKNNDGNDNRYDY) are enriched in basic and acidic residues. Over residues 185–201 (NDLQNNNNNDNNKYDYN) the composition is skewed to low complexity. Basic and acidic residues predominate over residues 204–221 (DDEKKNKNNDGDDNKYDY). Residues 406–443 (DNDDGDDYNDDNDNDDNYNDDNYNDDNYNDDNYNDDNY) show a composition bias toward acidic residues. Residues 771–851 (VNEKKKGENE…NEMNKDEENE (81 aa)) are a coiled coil. A helical membrane pass occupies residues 1059–1079 (LIYMIYLFFTYKKYDLLLMFI). Disordered regions lie at residues 1148-1187 (RRQE…NDYD), 1399-1467 (IPTQ…NDDD), and 1711-1733 (QKKK…NKEN). Basic and acidic residues predominate over residues 1404-1463 (DKNETDEGNKNETDEGDKNETDEGDKNETDEGNKNETEEIYKNETDEGNKNETEEIYKND). A run of 2 helical transmembrane segments spans residues 2059–2079 (FLLF…IFFF) and 2197–2217 (IIQC…DFLF). Disordered stretches follow at residues 2582–2644 (IYKD…DNNN) and 2776–2835 (GRIW…DKGD). The segment covering 2592-2629 (DNNDDDNINDDDNINDDDNINDDDNNNDDDNNNDDNND) has biased composition (acidic residues). Over residues 2779–2821 (WKREENGEKKKNEKNESEKNERNEKNEKNEKHEKHEKHEKNEK) the composition is skewed to basic and acidic residues. Positions 2785–2820 (GEKKKNEKNESEKNERNEKNEKNEKHEKHEKHEKNE) form a coiled coil. 2 consecutive transmembrane segments (helical) span residues 3229–3249 (LFII…SFIL) and 3296–3316 (LLFF…NINS).

The protein localises to the membrane. This is an uncharacterized protein from Plasmodium falciparum (isolate 3D7).